Here is a 271-residue protein sequence, read N- to C-terminus: Urease accessory protein UreD (271 aa).

The protein belongs to the UreD family. UreD, UreF and UreG form a complex that acts as a GTP-hydrolysis-dependent molecular chaperone, activating the urease apoprotein by helping to assemble the nickel containing metallocenter of UreC. The UreE protein probably delivers the nickel.

It is found in the cytoplasm. Required for maturation of urease via the functional incorporation of the urease nickel metallocenter. This Haemophilus influenzae (strain 86-028NP) protein is Urease accessory protein UreD.